The primary structure comprises 191 residues: dTTP/UTP pyrophosphatase (191 aa).

Aspartate 64 serves as the catalytic Proton acceptor.

Belongs to the Maf family. YhdE subfamily. Requires a divalent metal cation as cofactor.

The protein resides in the cytoplasm. It catalyses the reaction dTTP + H2O = dTMP + diphosphate + H(+). It carries out the reaction UTP + H2O = UMP + diphosphate + H(+). Nucleoside triphosphate pyrophosphatase that hydrolyzes dTTP and UTP. May have a dual role in cell division arrest and in preventing the incorporation of modified nucleotides into cellular nucleic acids. The polypeptide is dTTP/UTP pyrophosphatase (Thermosipho africanus (strain TCF52B)).